Consider the following 784-residue polypeptide: MNKKSLPLMALRDMVVFPGVIAPIFVGRKKSLQALSRTTISEENNSKYILVTLQKKFDQENPSKHELYNTAILAKIIQIVKLPNNTAKILIEAVARVKLSNIKDEEAFEANYEIIPDEEILDIHNMRSLVDNAVQLFSKYAMNDKKVNAEIIETINKEISNRTNFINIINILSSHLITSLETKQQLLEETNPVKRITTVITTLTSNIVNSETEHALQQRVRKQIEKTQRDYYLHEQMKAIQKELDEDKSELADIEKKIKSLKLSKEAKEKAESEFKKLRAMNQMSAESGVTRNYLETLLSLPWGKYDNSKIDINQAEKILNRDHFGLEKVKERIIEYLAVLQRSSKIRGPILCLIGPPGVGKTSLVKSIAEGMGRKYTKFSLGGVRDEAEIRGHRKTYLGSMPGKILGQLKKIKTSNPVMLLDEIDKMSSDFRGDPASALLEVLDPEQNSHFVDHYLEVEYDLSNVVFIATANSHDLPRALSDRMEKIYISGYVEEEKLQIAKNYLVPKQFKMHKIKEDEITISEAAILDLIRYYTKESGVRALEREICALTRKALKQILANKTVKHISIDSNNLEEFLGAKKYNFGLAEKEDQIGSTTGLAYTEVGGELLTIEALAFSGKGEIKTTGKLGDVMKESAMAAYSCFRSRATNFGLKYDNYKDFDIHIHVPAGAIPKDGPSAGCALFTTIVSLMTKIPVHRTVAMTGEITLRGNVLPIGGLKEKLLAASRGGIKTVLIPEENVKDLKDIPPNIKENLEIISVSNIDQVLKHALVEMPINKGLSYDL.

The 202-residue stretch at 6–207 folds into the Lon N-terminal domain; it reads LPLMALRDMV…TVITTLTSNI (202 aa). 356–363 is an ATP binding site; that stretch reads GPPGVGKT. Residues 592 to 773 enclose the Lon proteolytic domain; sequence EDQIGSTTGL…DQVLKHALVE (182 aa). Active-site residues include S679 and K722.

Belongs to the peptidase S16 family. As to quaternary structure, homohexamer. Organized in a ring with a central cavity.

The protein localises to the cytoplasm. The enzyme catalyses Hydrolysis of proteins in presence of ATP.. Functionally, ATP-dependent serine protease that mediates the selective degradation of mutant and abnormal proteins as well as certain short-lived regulatory proteins. Required for cellular homeostasis and for survival from DNA damage and developmental changes induced by stress. Degrades polypeptides processively to yield small peptide fragments that are 5 to 10 amino acids long. Binds to DNA in a double-stranded, site-specific manner. This Rickettsia prowazekii (strain Madrid E) protein is Lon protease.